Consider the following 54-residue polypeptide: Large ribosomal subunit protein bL33 (54 aa).

Belongs to the bacterial ribosomal protein bL33 family.

This Stenotrophomonas maltophilia (strain K279a) protein is Large ribosomal subunit protein bL33.